We begin with the raw amino-acid sequence, 453 residues long: Nuclear distribution protein nudF-2 (453 aa).

One can recognise a LisH domain in the interval 9–41 (QADELHRALIAYLTAANLPNTAAALREELNLSE). A coiled-coil region spans residues 62 to 88 (SVVRLQKKIMDLESRNHILQSELDNAT). A disordered region spans residues 84–107 (LDNATPTSRQNKDPVAWLPRAPPR). 7 WD repeats span residues 112–153 (SHRD…RTIK), 155–195 (HTKA…KNIR), 199–239 (GHDH…CVKT), 242–281 (GHAE…PEPK), 286–345 (GHEH…IKTL), 347–386 (GHDN…KCVK), and 391–449 (AHGH…LNVR).

This sequence belongs to the WD repeat LIS1/nudF family. In terms of assembly, self-associates. Interacts with ro-11/nde1 and dynein.

The protein resides in the cytoplasm. Its subcellular location is the cytoskeleton. It is found in the spindle pole. Its function is as follows. Positively regulates the activity of the minus-end directed microtubule motor protein dynein. May enhance dynein-mediated microtubule sliding by targeting dynein to the microtubule plus end. Required for nuclear migration during vegetative growth as well as development. Required for retrograde early endosome (EE) transport from the hyphal tip. Required for localization of dynein to the mitotic spindle poles. Recruits additional proteins to the dynein complex at SPBs. In Neurospora crassa (strain ATCC 24698 / 74-OR23-1A / CBS 708.71 / DSM 1257 / FGSC 987), this protein is Nuclear distribution protein nudF-2 (nmp-1).